A 67-amino-acid polypeptide reads, in one-letter code: MKPDIHPDYTTVTVSCSCGNTFETRSTIGKDFHVEVCSACHPFYTGKQKIVDTAGRVDKFRRKYGRG.

Positions 16, 18, 37, and 40 each coordinate Zn(2+).

It belongs to the bacterial ribosomal protein bL31 family. Type A subfamily. In terms of assembly, part of the 50S ribosomal subunit. Zn(2+) is required as a cofactor.

In terms of biological role, binds the 23S rRNA. In Methylococcus capsulatus (strain ATCC 33009 / NCIMB 11132 / Bath), this protein is Large ribosomal subunit protein bL31.